A 98-amino-acid chain; its full sequence is Hainantoxin-XVII.3 (98 aa).

The signal sequence occupies residues 1 to 40 (MTTVGVSLFRRSPEKITMKIATFLGLSFLLIASYFLICEA). A propeptide spanning residues 41-64 (QHPGFQELLILEENMRDPENSKER) is cleaved from the precursor. 3 disulfides stabilise this stretch: Cys-66–Cys-81, Cys-73–Cys-85, and Cys-80–Cys-95.

It belongs to the hainantoxin family. 17 subfamily. In terms of tissue distribution, expressed by the venom gland.

Its subcellular location is the secreted. Its function is as follows. Inhibits with low potency Kv1.2/KCNA2 and Kv1.3/KCNA3 voltage-gated potassium channels. The polypeptide is Hainantoxin-XVII.3 (Cyriopagopus hainanus (Chinese bird spider)).